The chain runs to 714 residues: Methyl-accepting chemotaxis protein TlpQ (714 aa).

A helical membrane pass occupies residues 12 to 32 (ITLLAGLCLLGVVALLVGLSV). The region spanning 50 to 290 (LDESARLRLE…LLGKNLAKAD (241 aa)) is the Cache domain. Histamine-binding positions include Glu170, 208–210 (YFD), and Asp239. The chain crosses the membrane as a helical span at residues 360–380 (TWVELGLGLGAAVLGLLVLWL). The HAMP domain occupies 383–437 (RGVTRPILGVAHMLRDIASGEGDLTQRLPHTGRDELGELAGWFNRFLDKLQPIIR). Positions 442–678 (SVRDARSTAD…EINRNVAAIR (237 aa)) constitute a Methyl-accepting transducer domain.

Belongs to the methyl-accepting chemotaxis (MCP) protein family. Homotetramer.

It is found in the cell membrane. Functionally, chemotactic-signal transducers respond to changes in the concentration of attractants and repellents in the environment, transduce a signal from the outside to the inside of the cell, and facilitate sensory adaptation through the variation of the level of methylation. TlpQ is a chemoreceptor that binds and mediates chemotaxis to histamine, a key biological signaling molecule. It binds histamine with high affinity, which permits responses to very low histamine concentrations. Chemotaxis to histamine may play a role in the virulence of P.aeruginosa by recruiting cells at the infection site and consequently modulating the expression of quorum-sensing-dependent virulence genes. TlpQ also binds and mediates chemotaxis to polyamines such as putrescine, spermidine, cadaverine, agmatine and ethylenediamine. In addition, binds the quorum-sensing signal autoinducer 2 (AI-2), thus inducing chemotaxis toward AI-2 and biofilm formation. This chain is Methyl-accepting chemotaxis protein TlpQ, found in Pseudomonas aeruginosa (strain ATCC 15692 / DSM 22644 / CIP 104116 / JCM 14847 / LMG 12228 / 1C / PRS 101 / PAO1).